We begin with the raw amino-acid sequence, 374 residues long: MMTDNSKTRVVVGMSGGVDSSVTALLLKEQGYDVIGVFMKNWDDTDEFGVCTATEDYKDVAAVADQIGIPYYSVNFEKEYWDRVFEYFLAEYRSGRTPNPDVMCNKEIKFKAFLDYAMTLGADYVATGHYAQIKRDENGVVHMLRGFDKGKDQTYFLSQLSQKQLQKTMFPLGHLQKSEVRAIAEQAGLATAKKKDSTGICFIGEKNFKTFLSHYLPAQKGRMMTVDGRDMGEHAGLMYYTIGQRGGLGIGGQQGGDNKPWFVVGKDLSQNILYVGQGFYHESLMSTSLDASVIQFTREVPEEFTLECTAKFRYRQPDSKVTVHVKKDKAKVVFAEPQRAITPGQAVVFYDGHECLGGGIIDMAYKDGEPCQYI.

Residues 13 to 20 (GMSGGVDS) and methionine 39 each bind ATP. Residues 99-101 (NPD) form an interaction with target base in tRNA region. Cysteine 104 functions as the Nucleophile in the catalytic mechanism. Residues cysteine 104 and cysteine 201 are joined by a disulfide bond. Residue glycine 128 coordinates ATP. Positions 151-153 (KDQ) are interaction with tRNA. Cysteine 201 acts as the Cysteine persulfide intermediate in catalysis. An interaction with tRNA region spans residues 313–314 (RY).

It belongs to the MnmA/TRMU family.

The protein resides in the cytoplasm. It carries out the reaction S-sulfanyl-L-cysteinyl-[protein] + uridine(34) in tRNA + AH2 + ATP = 2-thiouridine(34) in tRNA + L-cysteinyl-[protein] + A + AMP + diphosphate + H(+). Catalyzes the 2-thiolation of uridine at the wobble position (U34) of tRNA, leading to the formation of s(2)U34. The chain is tRNA-specific 2-thiouridylase MnmA from Streptococcus equi subsp. zooepidemicus (strain H70).